A 294-amino-acid polypeptide reads, in one-letter code: Bifunctional protein FolD (294 aa).

Residues 166–168 (GRS), Ser191, and Ile232 contribute to the NADP(+) site.

It belongs to the tetrahydrofolate dehydrogenase/cyclohydrolase family. Homodimer.

It carries out the reaction (6R)-5,10-methylene-5,6,7,8-tetrahydrofolate + NADP(+) = (6R)-5,10-methenyltetrahydrofolate + NADPH. The enzyme catalyses (6R)-5,10-methenyltetrahydrofolate + H2O = (6R)-10-formyltetrahydrofolate + H(+). Its pathway is one-carbon metabolism; tetrahydrofolate interconversion. Its function is as follows. Catalyzes the oxidation of 5,10-methylenetetrahydrofolate to 5,10-methenyltetrahydrofolate and then the hydrolysis of 5,10-methenyltetrahydrofolate to 10-formyltetrahydrofolate. The chain is Bifunctional protein FolD from Nitrobacter hamburgensis (strain DSM 10229 / NCIMB 13809 / X14).